A 120-amino-acid chain; its full sequence is A-type ATP synthase subunit F (120 aa).

This sequence belongs to the V-ATPase F subunit family. Has multiple subunits with at least A(3), B(3), C, D, E, F, H, I and proteolipid K(x).

Its subcellular location is the cell membrane. Component of the A-type ATP synthase that produces ATP from ADP in the presence of a proton gradient across the membrane. This Halobacterium salinarum (strain ATCC 29341 / DSM 671 / R1) protein is A-type ATP synthase subunit F.